A 157-amino-acid polypeptide reads, in one-letter code: Protein Smg homolog (157 aa).

The protein belongs to the Smg family.

The chain is Protein Smg homolog from Shewanella pealeana (strain ATCC 700345 / ANG-SQ1).